The chain runs to 625 residues: Archaeosine synthase subunit alpha (625 aa).

Residues 556 to 624 (KYVVKIDDFV…VAVDVRHVKK (69 aa)) form the PUA domain.

Belongs to the archaeosine synthase type 1 family. In terms of assembly, forms a robust complex with the archaeosine synthase beta subunit RaSEA. Formation of this complex highly increases lysine transfer activity. The complex likely consists of an alpha(2)beta(2) heterotetrameric structure.

The enzyme catalyses 7-cyano-7-carbaguanosine(15) in tRNA + L-lysine = 7-N-[(5S)-5-amino-5-carboxypentyl]formamidino-7-deazaguanosine(15) in tRNA. The protein operates within tRNA modification; archaeosine-tRNA biosynthesis. Functions in the biosynthesis of archaeosine, a modified nucleoside present in the dihydrouridine loop (D-loop) of archaeal tRNAs. Catalyzes the addition of L-lysine to the cyano group of 7-cyano-7-deazaguanine (preQ0)-modified tRNAs at position 15, to generate q0kN15-tRNA, a q0N lysine adduct identified as 7-N-[(5S)-5-amino-5-carboxypentyl]formamidino-7-deazaguanosine. This is Archaeosine synthase subunit alpha from Methanosarcina acetivorans (strain ATCC 35395 / DSM 2834 / JCM 12185 / C2A).